Here is a 196-residue protein sequence, read N- to C-terminus: Holliday junction branch migration complex subunit RuvA (196 aa).

Positions 1 to 63 are domain I; the sequence is MLDFIKGEIV…EETHQLFGFI (63 aa). A domain II region spans residues 64–142; it reads DKKERQLFTH…PDNIPSSDTI (79 aa). The interval 143-146 is flexible linker; the sequence is ITNI. The interval 146 to 196 is domain III; that stretch reads ISSNITKEAITALITLGFSQSASQKVVNKIVSNNSSSTTIEQIIKKALKLL.

Belongs to the RuvA family. As to quaternary structure, homotetramer. Forms an RuvA(8)-RuvB(12)-Holliday junction (HJ) complex. HJ DNA is sandwiched between 2 RuvA tetramers; dsDNA enters through RuvA and exits via RuvB. An RuvB hexamer assembles on each DNA strand where it exits the tetramer. Each RuvB hexamer is contacted by two RuvA subunits (via domain III) on 2 adjacent RuvB subunits; this complex drives branch migration. In the full resolvosome a probable DNA-RuvA(4)-RuvB(12)-RuvC(2) complex forms which resolves the HJ.

It localises to the cytoplasm. The RuvA-RuvB-RuvC complex processes Holliday junction (HJ) DNA during genetic recombination and DNA repair, while the RuvA-RuvB complex plays an important role in the rescue of blocked DNA replication forks via replication fork reversal (RFR). RuvA specifically binds to HJ cruciform DNA, conferring on it an open structure. The RuvB hexamer acts as an ATP-dependent pump, pulling dsDNA into and through the RuvAB complex. HJ branch migration allows RuvC to scan DNA until it finds its consensus sequence, where it cleaves and resolves the cruciform DNA. This chain is Holliday junction branch migration complex subunit RuvA, found in Azobacteroides pseudotrichonymphae genomovar. CFP2.